Here is a 357-residue protein sequence, read N- to C-terminus: Arginine kinase (357 aa).

Ala-2 is subject to N-acetylalanine. Residues 9-91 form the Phosphagen kinase N-terminal domain; it reads KLEEGFKKLE…FDPIIEDYHK (83 aa). 64-68 contacts L-arginine; it reads GVGVY. Positions 119-356 constitute a Phosphagen kinase C-terminal domain; the sequence is FVISTRVRCG…LELIKIEKEM (238 aa). Residues 122–126 and His-185 each bind ATP; that span reads STRVR. Glu-225 contacts L-arginine. Arg-229 contributes to the ATP binding site. Cys-271 serves as a coordination point for L-arginine. Residues 280–284 and 309–314 contribute to the ATP site; these read RASVH and RGTRGE. Glu-314 lines the L-arginine pocket.

It belongs to the ATP:guanido phosphotransferase family.

The catalysed reaction is L-arginine + ATP = N(omega)-phospho-L-arginine + ADP + H(+). This chain is Arginine kinase, found in Callinectes sapidus (Blue crab).